We begin with the raw amino-acid sequence, 577 residues long: Laccase-25 (577 aa).

A signal peptide spans 1 to 22; it reads MTLHWSLLLFIAIALVSSVAQA. 2 consecutive Plastocyanin-like domains span residues 30 to 147 and 158 to 313; these read NVGN…PRGG and KEHV…YAGA. Residue asparagine 33 is glycosylated (N-linked (GlcNAc...) asparagine). Cu cation-binding residues include histidine 81 and histidine 83. Asparagine 109 carries N-linked (GlcNAc...) asparagine glycosylation. 2 residues coordinate Cu cation: histidine 126 and histidine 128. Residues asparagine 169, asparagine 203, asparagine 208, asparagine 218, asparagine 332, asparagine 383, asparagine 396, asparagine 404, asparagine 441, and asparagine 459 are each glycosylated (N-linked (GlcNAc...) asparagine). Residues 423–560 form the Plastocyanin-like 3 domain; sequence DFPDTPPVVF…AMVLEVLDGP (138 aa). Cu cation-binding residues include histidine 477, histidine 480, histidine 482, histidine 539, cysteine 540, histidine 541, and histidine 545.

It belongs to the multicopper oxidase family. Requires Cu cation as cofactor.

The protein resides in the secreted. It localises to the extracellular space. Its subcellular location is the apoplast. It carries out the reaction 4 hydroquinone + O2 = 4 benzosemiquinone + 2 H2O. Functionally, lignin degradation and detoxification of lignin-derived products. The sequence is that of Laccase-25 (LAC25) from Oryza sativa subsp. japonica (Rice).